Consider the following 247-residue polypeptide: Capsid protein (247 aa).

The DNA-binding stretch occupies residues 1 to 40 (MWGTSNCACAKFQIRRRYARPYRRRHIRRYRRRRRHFRRR). Residues 15 to 44 (RRRYARPYRRRHIRRYRRRRRHFRRRRFTT) are nuclear localization signals.

Belongs to the circoviridae capsid protein family. In terms of assembly, homomultimer. Assembles in the nucleus, presumably in an immature form, then migrates to the cytoplasm once assembled as mature virion. Interacts with Rep; this interaction relocates Rep into the nucleus.

The protein localises to the host nucleus. Its subcellular location is the virion. Self-assembles to form the virion icosahedral capsid with a T=1 symmetry. This very small capsid (17 - 22 nm in diameter) allows the virus to be very stable in the environment and resistant to some disinfectants, including detergents. Essential for the initial attachment to heparan sulfate moieties and chondroitin sulfate B of the host cell surface proteoglycans. After attachment, the virus is endocytosed and traffics to the nucleus. The capsid protein binds and transports the viral genome and Rep across the nuclear envelope. In Beak and feather disease virus (BFDV), this protein is Capsid protein (Cap).